Reading from the N-terminus, the 216-residue chain is Adenylate kinase (216 aa).

10 to 15 contributes to the ATP binding site; that stretch reads GAGKGT. The segment at 30–59 is NMP; that stretch reads STGDMFRAAMKAETELGLQAKSFIDKGALV. AMP contacts are provided by residues Thr-31, Arg-36, 57–59, 85–88, and Gln-92; these read ALV and GFPR. The tract at residues 126–163 is LID; that stretch reads GRRICKECGATYHLEFNPPAKADVCDKCGGELYQRSDD. Residue Arg-127 coordinates ATP. Zn(2+) is bound by residues Cys-130 and Cys-133. 136–137 lines the ATP pocket; sequence TY. Residues Cys-150 and Cys-153 each contribute to the Zn(2+) site. AMP is bound by residues Arg-160 and Arg-171. Gln-199 is a binding site for ATP.

It belongs to the adenylate kinase family. Monomer.

It is found in the cytoplasm. It carries out the reaction AMP + ATP = 2 ADP. It participates in purine metabolism; AMP biosynthesis via salvage pathway; AMP from ADP: step 1/1. Its function is as follows. Catalyzes the reversible transfer of the terminal phosphate group between ATP and AMP. Plays an important role in cellular energy homeostasis and in adenine nucleotide metabolism. The chain is Adenylate kinase from Bacillus cytotoxicus (strain DSM 22905 / CIP 110041 / 391-98 / NVH 391-98).